The sequence spans 513 residues: uncharacterized protein (513 aa).

Disordered stretches follow at residues 72-113 (GVVP…TGQF) and 155-262 (IMGG…NPRF). A compositionally biased stretch (low complexity) spans 82-106 (ANRTANPNTNSNPNPNATNAQPNPT). Polar residues-rich tracts occupy residues 164–189 (EANS…QTQG) and 210–228 (TPLN…EFQQ). Residues 229–238 (TTSPIFSSSS) are compositionally biased toward low complexity. Residues 239 to 248 (TPPPPPPRPS) show a composition bias toward pro residues. Over residues 253–262 (GESQNTNPRF) the composition is skewed to polar residues. The segment at 396–437 (CTICMEMFKINDDVIQLPCKHYFHENCIKPWLRVNGTCAICR) adopts an RING-type; atypical zinc-finger fold. The disordered stretch occupies residues 439–513 (PVDPNSQQRN…DDFVDEEPLE (75 aa)). Positions 442-493 (PNSQQRNNTSTDSANGHNPSNHANPSTSTTNDQGATLRNESFNAASQSNLSS) are enriched in polar residues.

This is an uncharacterized protein from Schizosaccharomyces pombe (strain 972 / ATCC 24843) (Fission yeast).